Reading from the N-terminus, the 437-residue chain is Indole diterpene prenyltransferase anaPT (437 aa).

Positions 1–28 are disordered; that stretch reads MSPLSMQTDSVQGTAENKSLETNGTSND. Residues 102–103 and Glu-111 contribute to the L-tryptophan site; that span reads GF. The dimethylallyl diphosphate site is built by Arg-124, Lys-208, Tyr-210, Tyr-282, Gln-355, Tyr-357, Tyr-422, and Tyr-426.

This sequence belongs to the tryptophan dimethylallyltransferase family.

It carries out the reaction (R)-benzodiazepinedione + dimethylallyl diphosphate = (2R,3S,11R)-aszonalenin + diphosphate. It catalyses the reaction (S)-benzodiazepinedione + dimethylallyl diphosphate = (2R,3S,11S)-aszonalenin + diphosphate. The protein operates within alkaloid biosynthesis. Indole diterpene prenyltransferase; part of the gene cluster that mediates the biosynthesis of the prenylated pyrroloindoline diketopiperazine acetylaszonalenin. The first step in the pathway is the formation of (R)-benzodiazepinedione by condensation of tryptophan and anthranilic acid catalyzed by the non-ribosomal peptide synthetase anaPS. The prenyltransferase anaPT then converts (R)-benzodiazepinedione to aszonalenin in the presence of dimethylallyl diphosphate (DMAPP) via C3-prenylation. The last step in the biosynthesis of acetylaszonalenin via acetylation of aszonalenin at position N1 catalyzed by anaAT. The polypeptide is Indole diterpene prenyltransferase anaPT (Neosartorya fischeri (strain ATCC 1020 / DSM 3700 / CBS 544.65 / FGSC A1164 / JCM 1740 / NRRL 181 / WB 181) (Aspergillus fischerianus)).